The following is a 95-amino-acid chain: Large ribosomal subunit protein bL25 (95 aa).

Belongs to the bacterial ribosomal protein bL25 family. Part of the 50S ribosomal subunit; part of the 5S rRNA/L5/L18/L25 subcomplex. Contacts the 5S rRNA. Binds to the 5S rRNA independently of L5 and L18.

Functionally, this is one of the proteins that binds to the 5S RNA in the ribosome where it forms part of the central protuberance. This is Large ribosomal subunit protein bL25 from Yersinia enterocolitica serotype O:8 / biotype 1B (strain NCTC 13174 / 8081).